Here is a 530-residue protein sequence, read N- to C-terminus: Autoinducer-2 kinase (530 aa).

Belongs to the FGGY kinase family.

The protein localises to the cytoplasm. It catalyses the reaction (S)-4,5-dihydroxypentane-2,3-dione + ATP = (2S)-2-hydroxy-3,4-dioxopentyl phosphate + ADP + H(+). Catalyzes the phosphorylation of autoinducer-2 (AI-2) to phospho-AI-2, which subsequently inactivates the transcriptional regulator LsrR and leads to the transcription of the lsr operon. Phosphorylates the ring-open form of (S)-4,5-dihydroxypentane-2,3-dione (DPD), which is the precursor to all AI-2 signaling molecules, at the C5 position. The protein is Autoinducer-2 kinase of Escherichia coli (strain ATCC 8739 / DSM 1576 / NBRC 3972 / NCIMB 8545 / WDCM 00012 / Crooks).